Consider the following 1288-residue polypeptide: VWFA and cache domain-containing protein 1 (1288 aa).

Residues 1–49 (MAREPEEEETVRPAAVVRRCPRCPGWPGAPRPPLWLLCLVACWILGAVA) form the signal peptide. At 50–1109 (DADFSILDEA…ITLNMIKSAP (1060 aa)) the chain is on the extracellular side. Asn-159 is a glycosylation site (N-linked (GlcNAc...) asparagine). Positions 242-457 (HIVVILDHGA…TTVGRFYTNL (216 aa)) constitute a VWFA domain. Cache domains follow at residues 467–546 (FSLP…SEPP) and 786–867 (LTGP…HPTL). A helical transmembrane segment spans residues 1110–1130 (VGPVAGGIMGCIMVLVLAVYA). The Cytoplasmic segment spans residues 1131–1288 (YRHQIHRRSH…VTVHTVDAEC (158 aa)). Disordered regions lie at residues 1157–1176 (NLEN…RGII) and 1187–1237 (ERHV…VDVG). The segment covering 1159–1174 (ENDRDERDDDSHEDRG) has biased composition (basic and acidic residues). The span at 1210–1229 (GYSTMSPQEDSENPPCNNDP) shows a compositional bias: polar residues.

This sequence belongs to the calcium channel subunit alpha-2/delta family.

The protein resides in the membrane. Its function is as follows. May regulate voltage-dependent calcium channels. The polypeptide is VWFA and cache domain-containing protein 1 (Cachd1) (Mus musculus (Mouse)).